A 390-amino-acid chain; its full sequence is GTPase Obg (390 aa).

In terms of domain architecture, Obg spans 1 to 159; sequence MKFVDEASIL…RELLLELMLL (159 aa). Residues 127 to 147 are disordered; that stretch reads NTRFKSSVNRTPRQKTNGTPG. Residues 129–145 are compositionally biased toward polar residues; sequence RFKSSVNRTPRQKTNGT. The 174-residue stretch at 160–333 folds into the OBG-type G domain; sequence ADVGMLGMPN…LCWDVMTFIL (174 aa). GTP-binding positions include 166 to 173, 191 to 195, 213 to 216, 283 to 286, and 314 to 316; these read GMPNAGKS, FTTLV, DIPG, NKID, and SAA. Residues Ser173 and Thr193 each coordinate Mg(2+).

The protein belongs to the TRAFAC class OBG-HflX-like GTPase superfamily. OBG GTPase family. Monomer. Requires Mg(2+) as cofactor.

It is found in the cytoplasm. Its function is as follows. An essential GTPase which binds GTP, GDP and possibly (p)ppGpp with moderate affinity, with high nucleotide exchange rates and a fairly low GTP hydrolysis rate. Plays a role in control of the cell cycle, stress response, ribosome biogenesis and in those bacteria that undergo differentiation, in morphogenesis control. The protein is GTPase Obg of Shigella sonnei (strain Ss046).